Here is an 808-residue protein sequence, read N- to C-terminus: Putative minor structural protein VP5 (808 aa).

It localises to the virion. The protein is Putative minor structural protein VP5 of Rice ragged stunt virus (isolate Thailand) (RRSV).